A 427-amino-acid chain; its full sequence is Putative B3 domain-containing protein Os04g0346900 (427 aa).

2 consecutive DNA-binding regions (TF-B3) follow at residues 25-118 and 140-236; these read LVPS…FDTT and KPQF…FGPN. Residues 253–309 form a disordered region; sequence TGEQQEAPSFSRRKCNNKKKSRFGEDDGNQQEMPCSRKGSGNKGRTSDRETKRMRKT. Positions 263 to 273 are enriched in basic residues; it reads SRRKCNNKKKS. A DNA-binding region (TF-B3 3) is located at residues 320–427; sequence WIKKEINEYV…TLWRVDIERC (108 aa).

Its subcellular location is the nucleus. This Oryza sativa subsp. japonica (Rice) protein is Putative B3 domain-containing protein Os04g0346900.